The primary structure comprises 188 residues: Elongation factor P (188 aa).

Residue K34 is modified to N6-(3,6-diaminohexanoyl)-5-hydroxylysine.

This sequence belongs to the elongation factor P family. May be beta-lysylated on the epsilon-amino group of Lys-34 by the combined action of EpmA and EpmB, and then hydroxylated on the C5 position of the same residue by EpmC (if this protein is present). Lysylation is critical for the stimulatory effect of EF-P on peptide-bond formation. The lysylation moiety may extend toward the peptidyltransferase center and stabilize the terminal 3-CCA end of the tRNA. Hydroxylation of the C5 position on Lys-34 may allow additional potential stabilizing hydrogen-bond interactions with the P-tRNA.

It localises to the cytoplasm. It participates in protein biosynthesis; polypeptide chain elongation. Functionally, involved in peptide bond synthesis. Alleviates ribosome stalling that occurs when 3 or more consecutive Pro residues or the sequence PPG is present in a protein, possibly by augmenting the peptidyl transferase activity of the ribosome. Modification of Lys-34 is required for alleviation. The chain is Elongation factor P from Pectobacterium carotovorum subsp. carotovorum (strain PC1).